A 74-amino-acid polypeptide reads, in one-letter code: uncharacterized protein (74 aa).

The signal sequence occupies residues 1–19; that stretch reads MNPGFDAVDQETAAAQAVA.

This is an uncharacterized protein from Mycobacterium tuberculosis (strain ATCC 25618 / H37Rv).